A 247-amino-acid polypeptide reads, in one-letter code: Probable phosphatase swp_1620 (247 aa).

Zn(2+) contacts are provided by His-8, His-10, His-16, His-41, Glu-74, His-102, His-132, Asp-193, and His-195.

This sequence belongs to the PHP family. It depends on Zn(2+) as a cofactor.

The polypeptide is Probable phosphatase swp_1620 (Shewanella piezotolerans (strain WP3 / JCM 13877)).